The chain runs to 110 residues: Large ribosomal subunit protein uL22 (110 aa).

The protein belongs to the universal ribosomal protein uL22 family. Part of the 50S ribosomal subunit.

In terms of biological role, this protein binds specifically to 23S rRNA; its binding is stimulated by other ribosomal proteins, e.g. L4, L17, and L20. It is important during the early stages of 50S assembly. It makes multiple contacts with different domains of the 23S rRNA in the assembled 50S subunit and ribosome. Its function is as follows. The globular domain of the protein is located near the polypeptide exit tunnel on the outside of the subunit, while an extended beta-hairpin is found that lines the wall of the exit tunnel in the center of the 70S ribosome. The chain is Large ribosomal subunit protein uL22 from Bdellovibrio bacteriovorus (strain ATCC 15356 / DSM 50701 / NCIMB 9529 / HD100).